A 345-amino-acid polypeptide reads, in one-letter code: MYKDCIESTGDYFLLCDAEGPWGIILESLAILGIVVTILLLLAFLFLMRKIQDCSQWNVLPTQLLFLLSVLGLFGLAFAFIIELNQQTAPVRYFLFGVLFALCFSCLLAHASNLVKLVRGCVSFSWTTILCIAIGCSLLQIIIATEYVTLIMTRGMMFVNMTPCQLNVDFVVLLVYVLFLMALTFFVSKATFCGPCENWKQHGRLIFITVLFSIIIWVVWISMLLRGNPQFQRQPQWDDPVVCIALVTNAWVFLLLYIVPELCILYRSCRQECPLQGNACPVTAYQHSFQVENQELSRARDSDGAEEDVALTSYGTPIQPQTVDPTQECFIPQAKLSPQQDAGGV.

Residues 1 to 27 (MYKDCIESTGDYFLLCDAEGPWGIILE) are Extracellular-facing. A helical transmembrane segment spans residues 28 to 48 (SLAILGIVVTILLLLAFLFLM). Over 49–63 (RKIQDCSQWNVLPTQ) the chain is Cytoplasmic. A helical membrane pass occupies residues 64 to 84 (LLFLLSVLGLFGLAFAFIIEL). Topologically, residues 85–93 (NQQTAPVRY) are extracellular. Residues 94–114 (FLFGVLFALCFSCLLAHASNL) traverse the membrane as a helical segment. Residues 115 to 123 (VKLVRGCVS) lie on the Cytoplasmic side of the membrane. A helical membrane pass occupies residues 124–144 (FSWTTILCIAIGCSLLQIIIA). The Extracellular portion of the chain corresponds to 145–167 (TEYVTLIMTRGMMFVNMTPCQLN). The chain crosses the membrane as a helical span at residues 168 to 188 (VDFVVLLVYVLFLMALTFFVS). Topologically, residues 189 to 204 (KATFCGPCENWKQHGR) are cytoplasmic. Residues 205–225 (LIFITVLFSIIIWVVWISMLL) form a helical membrane-spanning segment. The Extracellular portion of the chain corresponds to 226 to 239 (RGNPQFQRQPQWDD). Residues 240–260 (PVVCIALVTNAWVFLLLYIVP) form a helical membrane-spanning segment. Topologically, residues 261–345 (ELCILYRSCR…LSPQQDAGGV (85 aa)) are cytoplasmic.

The protein belongs to the G-protein coupled receptor 3 family. In terms of assembly, homodimer. As to expression, widely expressed in the peripheral system. Expression pattern is high in pancreas, medium in kidney, small intestine, spleen and testis, low in lung, colon, leukocyte, prostate and thymus and not detectable in brain, heart, liver, placenta, skeletal muscle and ovary.

It is found in the cell membrane. Functionally, G-protein coupled receptor involved in hard keratin expression and likely plays a role in the development of hair and nails. This is G-protein coupled receptor family C group 5 member D (GPRC5D) from Homo sapiens (Human).